We begin with the raw amino-acid sequence, 100 residues long: RxLR effector protein Avrblb2 (100 aa).

The first 22 residues, 1–22 (MRSFLYGVLAFAVLARSSAVAA), serve as a signal peptide directing secretion. Residues 43–57 (RSLRIEAQEVIQSGR) carry the RxLR-dEER motif. A Calmodulin-binding motif motif is present at residues 78–82 (RPDIK).

Belongs to the RxLR effector family. As to quaternary structure, interacts with the host papain-like cysteine protease C14. Interacts with the host calmodulin.

It localises to the secreted. The protein localises to the host cell membrane. Secreted effector that acts as an elicitor of hypersensitive response (HR) specifically on plants carrying defense protein Rpi-blb2. Enhances P.infestans colonization of Nicotiana benthamiana leaves. Interacts with, and subsequently prevents secretion into the apoplast of the host papain-like cysteine protease C14, thus promoting virulence by interfering with the execution of host defenses. Associates with calmodulin at the host plasma membrane to interfere with plant defense-associated calcium signaling in hosts. The chain is RxLR effector protein Avrblb2 from Phytophthora infestans (strain T30-4) (Potato late blight agent).